Consider the following 368-residue polypeptide: Acetyl-coenzyme A carboxylase carboxyl transferase subunit alpha (368 aa).

The region spanning 44–294 (EIDNKLQEIY…RKSIEKNLNE (251 aa)) is the CoA carboxyltransferase C-terminal domain.

Belongs to the AccA family. In terms of assembly, acetyl-CoA carboxylase is a heterohexamer composed of biotin carboxyl carrier protein (AccB), biotin carboxylase (AccC) and two subunits each of ACCase subunit alpha (AccA) and ACCase subunit beta (AccD).

The protein resides in the cytoplasm. The enzyme catalyses N(6)-carboxybiotinyl-L-lysyl-[protein] + acetyl-CoA = N(6)-biotinyl-L-lysyl-[protein] + malonyl-CoA. It functions in the pathway lipid metabolism; malonyl-CoA biosynthesis; malonyl-CoA from acetyl-CoA: step 1/1. Functionally, component of the acetyl coenzyme A carboxylase (ACC) complex. First, biotin carboxylase catalyzes the carboxylation of biotin on its carrier protein (BCCP) and then the CO(2) group is transferred by the carboxyltransferase to acetyl-CoA to form malonyl-CoA. This is Acetyl-coenzyme A carboxylase carboxyl transferase subunit alpha from Pelagibacter ubique (strain HTCC1062).